Here is a 370-residue protein sequence, read N- to C-terminus: Queuine tRNA-ribosyltransferase (370 aa).

D93 acts as the Proton acceptor in catalysis. Residues 93–97 (DSGGF), D147, Q189, and G216 each bind substrate. Residues 247–253 (GVGSPDC) are RNA binding. The active-site Nucleophile is D266. The tract at residues 271 to 275 (TRIAR) is RNA binding; important for wobble base 34 recognition. Zn(2+)-binding residues include C304, C306, C309, and H335.

Belongs to the queuine tRNA-ribosyltransferase family. In terms of assembly, homodimer. Within each dimer, one monomer is responsible for RNA recognition and catalysis, while the other monomer binds to the replacement base PreQ1. The cofactor is Zn(2+).

The enzyme catalyses 7-aminomethyl-7-carbaguanine + guanosine(34) in tRNA = 7-aminomethyl-7-carbaguanosine(34) in tRNA + guanine. It participates in tRNA modification; tRNA-queuosine biosynthesis. Functionally, catalyzes the base-exchange of a guanine (G) residue with the queuine precursor 7-aminomethyl-7-deazaguanine (PreQ1) at position 34 (anticodon wobble position) in tRNAs with GU(N) anticodons (tRNA-Asp, -Asn, -His and -Tyr). Catalysis occurs through a double-displacement mechanism. The nucleophile active site attacks the C1' of nucleotide 34 to detach the guanine base from the RNA, forming a covalent enzyme-RNA intermediate. The proton acceptor active site deprotonates the incoming PreQ1, allowing a nucleophilic attack on the C1' of the ribose to form the product. After dissociation, two additional enzymatic reactions on the tRNA convert PreQ1 to queuine (Q), resulting in the hypermodified nucleoside queuosine (7-(((4,5-cis-dihydroxy-2-cyclopenten-1-yl)amino)methyl)-7-deazaguanosine). In Pelotomaculum thermopropionicum (strain DSM 13744 / JCM 10971 / SI), this protein is Queuine tRNA-ribosyltransferase.